We begin with the raw amino-acid sequence, 379 residues long: Cytochrome b (379 aa).

4 helical membrane-spanning segments follow: residues 33-53 (FGSL…FLAM), 77-98 (WLIR…FIHV), 113-133 (WNIG…GYVL), and 178-198 (FFAF…VHLL). Heme b contacts are provided by His83 and His97. Heme b contacts are provided by His182 and His196. His201 is an a ubiquinone binding site. The next 4 membrane-spanning stretches (helical) occupy residues 226–246 (TKDL…ALFF), 288–308 (LGGV…PLLN), 320–340 (VTQV…WIGG), and 347–367 (FTTI…ILIP).

The protein belongs to the cytochrome b family. In terms of assembly, the cytochrome bc1 complex contains 11 subunits: 3 respiratory subunits (MT-CYB, CYC1 and UQCRFS1), 2 core proteins (UQCRC1 and UQCRC2) and 6 low-molecular weight proteins (UQCRH/QCR6, UQCRB/QCR7, UQCRQ/QCR8, UQCR10/QCR9, UQCR11/QCR10 and a cleavage product of UQCRFS1). This cytochrome bc1 complex then forms a dimer. Heme b serves as cofactor.

It localises to the mitochondrion inner membrane. Its function is as follows. Component of the ubiquinol-cytochrome c reductase complex (complex III or cytochrome b-c1 complex) that is part of the mitochondrial respiratory chain. The b-c1 complex mediates electron transfer from ubiquinol to cytochrome c. Contributes to the generation of a proton gradient across the mitochondrial membrane that is then used for ATP synthesis. This is Cytochrome b (MT-CYB) from Akodon paranaensis (Parana grass mouse).